Consider the following 359-residue polypeptide: Protein-L-isoaspartate O-methyltransferase domain-containing protein 2 (359 aa).

Residue Gly-2 is the site of N-myristoyl glycine attachment. Residue Ser-64 is part of the active site. 3 adoMet binding motif regions span residues Leu-85–Leu-94, Tyr-160–Tyr-164, and Leu-181–Leu-191. The interval Val-240–Ala-250 is BC-box. Residues Ser-301–Lys-328 are disordered. The segment covering Glu-314 to Lys-328 has biased composition (basic and acidic residues). The CUL-box stretch occupies residues Leu-343 to Pro-346.

Belongs to the methyltransferase superfamily. L-isoaspartyl/D-aspartyl protein methyltransferase family.

The protein resides in the cytoplasm. May act as a substrate recognition component of an ECS (Elongin BC-CUL5-SOCS-box protein) E3 ubiquitin ligase complex which mediates the ubiquitination and subsequent proteasomal degradation of target proteins. May bind to the methyltransferase cofactor S-adenosylmethionine (AdoMet) via the N-terminal AdoMet binding motif, but probably does not display methyltransferase activity. The protein is Protein-L-isoaspartate O-methyltransferase domain-containing protein 2 (Pcmtd2) of Mus musculus (Mouse).